Here is a 39-residue protein sequence, read N- to C-terminus: Photosystem II reaction center protein J (39 aa).

Residues 7–27 (IPLWLVATVAGMGVITLLGIF) form a helical membrane-spanning segment.

The protein belongs to the PsbJ family. PSII is composed of 1 copy each of membrane proteins PsbA, PsbB, PsbC, PsbD, PsbE, PsbF, PsbH, PsbI, PsbJ, PsbK, PsbL, PsbM, PsbT, PsbX, PsbY, PsbZ, Psb30/Ycf12, peripheral proteins PsbO, CyanoQ (PsbQ), PsbU, PsbV and a large number of cofactors. It forms dimeric complexes.

It is found in the cellular thylakoid membrane. Functionally, one of the components of the core complex of photosystem II (PSII). PSII is a light-driven water:plastoquinone oxidoreductase that uses light energy to abstract electrons from H(2)O, generating O(2) and a proton gradient subsequently used for ATP formation. It consists of a core antenna complex that captures photons, and an electron transfer chain that converts photonic excitation into a charge separation. The protein is Photosystem II reaction center protein J of Cyanothece sp. (strain PCC 7425 / ATCC 29141).